Here is a 142-residue protein sequence, read N- to C-terminus: Large ribosomal subunit protein uL11 (142 aa).

The protein belongs to the universal ribosomal protein uL11 family. As to quaternary structure, part of the ribosomal stalk of the 50S ribosomal subunit. Interacts with L10 and the large rRNA to form the base of the stalk. L10 forms an elongated spine to which L12 dimers bind in a sequential fashion forming a multimeric L10(L12)X complex. In terms of processing, one or more lysine residues are methylated.

Its function is as follows. Forms part of the ribosomal stalk which helps the ribosome interact with GTP-bound translation factors. The polypeptide is Large ribosomal subunit protein uL11 (Hydrogenovibrio crunogenus (strain DSM 25203 / XCL-2) (Thiomicrospira crunogena)).